The primary structure comprises 449 residues: Glutamate--tRNA ligase (449 aa).

The short motif at 10-20 (PSPTGFLHIGN) is the 'HIGH' region element. Positions 214 to 218 (KLSKR) match the 'KMSKS' region motif. Position 217 (K217) interacts with ATP.

The protein belongs to the class-I aminoacyl-tRNA synthetase family. Glutamate--tRNA ligase type 1 subfamily. Monomer.

The protein resides in the cytoplasm. It catalyses the reaction tRNA(Glu) + L-glutamate + ATP = L-glutamyl-tRNA(Glu) + AMP + diphosphate. Catalyzes the attachment of glutamate to tRNA(Glu) in a two-step reaction: glutamate is first activated by ATP to form Glu-AMP and then transferred to the acceptor end of tRNA(Glu). The sequence is that of Glutamate--tRNA ligase from Onion yellows phytoplasma (strain OY-M).